The chain runs to 191 residues: Corticoliberin (191 aa).

The N-terminal stretch at 1–24 (MRLPLLVSAGVLLVALLPCPPCRA) is a signal peptide. Residues 25 to 148 (LLSRGPVLGA…RQEAPERERR (124 aa)) constitute a propeptide that is removed on maturation. The interval 115–153 (PLPRRPLDSPSGPAERGAENALSSRQEAPERERRSEEPP) is disordered. Residues 141–151 (EAPERERRSEE) show a composition bias toward basic and acidic residues. Isoleucine 189 carries the post-translational modification Isoleucine amide.

Belongs to the sauvagine/corticotropin-releasing factor/urotensin I family. In terms of assembly, interacts (via C-terminus) with CRFR1 (via N-terminal extracellular domain). As to expression, produced by the hypothalamus.

The protein resides in the secreted. In terms of biological role, hormone regulating the release of corticotropin from pituitary gland. Induces NLRP6 in intestinal epithelial cells, hence may influence gut microbiota profile. In Sus scrofa (Pig), this protein is Corticoliberin (CRH).